Consider the following 62-residue polypeptide: Photosystem II reaction center protein Z (62 aa).

Transmembrane regions (helical) follow at residues 8–28 (FLIA…VAYA) and 41–61 (YVGS…NFLV).

Belongs to the PsbZ family. As to quaternary structure, PSII is composed of 1 copy each of membrane proteins PsbA, PsbB, PsbC, PsbD, PsbE, PsbF, PsbH, PsbI, PsbJ, PsbK, PsbL, PsbM, PsbT, PsbX, PsbY, PsbZ, Psb30/Ycf12, peripheral proteins PsbO, CyanoQ (PsbQ), PsbU, PsbV and a large number of cofactors. It forms dimeric complexes.

The protein resides in the cellular thylakoid membrane. Its function is as follows. May control the interaction of photosystem II (PSII) cores with the light-harvesting antenna, regulates electron flow through the 2 photosystem reaction centers. PSII is a light-driven water plastoquinone oxidoreductase, using light energy to abstract electrons from H(2)O, generating a proton gradient subsequently used for ATP formation. The sequence is that of Photosystem II reaction center protein Z from Microcystis aeruginosa (strain NIES-843 / IAM M-2473).